A 137-amino-acid polypeptide reads, in one-letter code: Fluoride-specific ion channel FluC 1 (137 aa).

A run of 4 helical transmembrane segments spans residues 4–24, 37–57, 67–87, and 100–120; these read LIYI…YYLG, LATL…TTYI, VITG…TFSV, and IAFL…GLGY. Na(+) is bound by residues G77 and T80.

This sequence belongs to the fluoride channel Fluc/FEX (TC 1.A.43) family.

It is found in the cell membrane. It carries out the reaction fluoride(in) = fluoride(out). Its activity is regulated as follows. Na(+) is not transported, but it plays an essential structural role and its presence is essential for fluoride channel function. Its function is as follows. Fluoride-specific ion channel. Important for reducing fluoride concentration in the cell, thus reducing its toxicity. This chain is Fluoride-specific ion channel FluC 1, found in Bacillus thuringiensis subsp. konkukian (strain 97-27).